The chain runs to 568 residues: Proline--tRNA ligase (568 aa).

It belongs to the class-II aminoacyl-tRNA synthetase family. ProS type 1 subfamily. Homodimer.

The protein localises to the cytoplasm. The catalysed reaction is tRNA(Pro) + L-proline + ATP = L-prolyl-tRNA(Pro) + AMP + diphosphate. Catalyzes the attachment of proline to tRNA(Pro) in a two-step reaction: proline is first activated by ATP to form Pro-AMP and then transferred to the acceptor end of tRNA(Pro). As ProRS can inadvertently accommodate and process non-cognate amino acids such as alanine and cysteine, to avoid such errors it has two additional distinct editing activities against alanine. One activity is designated as 'pretransfer' editing and involves the tRNA(Pro)-independent hydrolysis of activated Ala-AMP. The other activity is designated 'posttransfer' editing and involves deacylation of mischarged Ala-tRNA(Pro). The misacylated Cys-tRNA(Pro) is not edited by ProRS. The polypeptide is Proline--tRNA ligase (Listeria monocytogenes serotype 4b (strain F2365)).